A 591-amino-acid chain; its full sequence is Peroxisome assembly protein 2 (591 aa).

Positions 1–78 (MSDSDPKPTA…TNIDTNNNTN (78 aa)) are disordered. Topologically, residues 1-148 (MSDSDPKPTA…TSREGTRPAF (148 aa)) are peroxisomal matrix. The segment covering 7 to 26 (KPTAAKGAAPTSIPNSTRNP) has biased composition (low complexity). The span at 27-54 (NPTPPNPNPNPNPISTPAPTPTATPSPP) shows a compositional bias: pro residues. The span at 55–78 (IASSSNNGNNSTRSTNIDTNNNTN) shows a compositional bias: low complexity. Residues 149-175 (RVGQVDAELLDEELVELLRGQVREALR) traverse the membrane as a helical segment. Over 176-196 (YVGGGGGGGGGGGGGGVGSGV) the chain is Cytoplasmic. The chain crosses the membrane as a helical span at residues 197-222 (AQDWEAEISLALRAVLFKLTVWDHDA). The Peroxisomal matrix segment spans residues 223–246 (TYGAALQNLKYTDARRDGPALAPP). A helical membrane pass occupies residues 247 to 273 (SRWQKALYGLVTVGGRYLWAKWEDWLL). The Cytoplasmic segment spans residues 274–283 (EQDDGFEGPS). A helical membrane pass occupies residues 284-314 (PRVKRLARWTSALSTLHASAALVSFLVFLLH). The Peroxisomal matrix portion of the chain corresponds to 315–341 (GRYRTLLDRLLRMRLAPPTSQVSREVS). Residues 342–365 (FEYLNRQLVWHAFTEFLLFVLPLV) traverse the membrane as a helical segment. The Cytoplasmic portion of the chain corresponds to 366-591 (GINRWRRWLA…EDGLDEDPES (226 aa)). The Zn(2+) site is built by cysteine 408, cysteine 411, cysteine 449, cysteine 451, cysteine 454, cysteine 457, cysteine 472, and cysteine 475. An RING-type; atypical zinc finger spans residues 408–475 (CAICYRDQNS…EGEGWPCLRC (68 aa)). The tract at residues 512 to 591 (KAPSDHEEEE…EDGLDEDPES (80 aa)) is disordered. 2 stretches are compositionally biased toward acidic residues: residues 517–537 (HEEE…ENEG) and 575–591 (SEDY…DPES).

This sequence belongs to the pex2/pex10/pex12 family. As to quaternary structure, component of the PEX2-PEX10-PEX12 retrotranslocation channel, composed of PEX2, PEX10 and PEX12.

It localises to the peroxisome membrane. The enzyme catalyses [E2 ubiquitin-conjugating enzyme]-S-ubiquitinyl-L-cysteine + [acceptor protein]-L-cysteine = [E2 ubiquitin-conjugating enzyme]-L-cysteine + [acceptor protein]-S-ubiquitinyl-L-cysteine.. It participates in protein modification; protein ubiquitination. In terms of biological role, E3 ubiquitin-protein ligase component of a retrotranslocation channel required for peroxisome organization by mediating export of the PEX5 receptor from peroxisomes to the cytosol, thereby promoting PEX5 recycling. The retrotranslocation channel is composed of PEX2, PEX10 and PEX12; each subunit contributing transmembrane segments that coassemble into an open channel that specifically allows the passage of PEX5 through the peroxisomal membrane. PEX2 also regulates peroxisome organization by acting as a E3 ubiquitin-protein ligase. PEX2 ubiquitinates PEX5 during its passage through the retrotranslocation channel: catalyzes monoubiquitination of PEX5 at 'Cys-6', a modification that acts as a signal for PEX5 extraction into the cytosol. The protein is Peroxisome assembly protein 2 of Thermothelomyces thermophilus (strain ATCC 42464 / BCRC 31852 / DSM 1799) (Sporotrichum thermophile).